A 144-amino-acid chain; its full sequence is Transcriptional regulator MraZ (144 aa).

2 SpoVT-AbrB domains span residues 6 to 48 (TYTP…PTDV) and 77 to 120 (ADEG…DPVR).

This sequence belongs to the MraZ family. Forms oligomers.

Its subcellular location is the cytoplasm. It localises to the nucleoid. In Nocardioides sp. (strain ATCC BAA-499 / JS614), this protein is Transcriptional regulator MraZ.